A 360-amino-acid polypeptide reads, in one-letter code: Photosystem II protein D1 (360 aa).

Transmembrane regions (helical) follow at residues 29–46 (YIGWFGVLMIPTLVSAIA), 118–133 (HFLIGVACYLGREWEL), and 142–156 (WICVAFSAPVAAATA). His118 serves as a coordination point for chlorophyll a. Pheophytin a is bound at residue Tyr126. Positions 170 and 189 each coordinate [CaMn4O5] cluster. Residues 197-218 (FHMLGVAGVFGGSLFSAMHGSL) traverse the membrane as a helical segment. His198 lines the chlorophyll a pocket. Residues His215 and 264 to 265 (SF) each bind a quinone. His215 lines the Fe cation pocket. His272 is a Fe cation binding site. The helical transmembrane segment at 274–288 (FLAAWPVIGIWFTAL) threads the bilayer. [CaMn4O5] cluster contacts are provided by His332, Glu333, Asp342, and Ala344. Residues 345-360 (AGDVAPVALTAPPING) constitute a propeptide that is removed on maturation.

This sequence belongs to the reaction center PufL/M/PsbA/D family. In terms of assembly, PSII is composed of 1 copy each of membrane proteins PsbA, PsbB, PsbC, PsbD, PsbE, PsbF, PsbH, PsbI, PsbJ, PsbK, PsbL, PsbM, PsbT, PsbX, PsbY, PsbZ, Psb30/Ycf12, peripheral proteins PsbO, CyanoQ (PsbQ), PsbU, PsbV and a large number of cofactors. It forms dimeric complexes. The cofactor is The D1/D2 heterodimer binds P680, chlorophylls that are the primary electron donor of PSII, and subsequent electron acceptors. It shares a non-heme iron and each subunit binds pheophytin, quinone, additional chlorophylls, carotenoids and lipids. D1 provides most of the ligands for the Mn4-Ca-O5 cluster of the oxygen-evolving complex (OEC). There is also a Cl(-1) ion associated with D1 and D2, which is required for oxygen evolution. The PSII complex binds additional chlorophylls, carotenoids and specific lipids.. Post-translationally, tyr-161 forms a radical intermediate that is referred to as redox-active TyrZ, YZ or Y-Z. C-terminally processed by CtpA; processing is essential to allow assembly of the oxygen-evolving complex and thus photosynthetic growth.

The protein localises to the cellular thylakoid membrane. The enzyme catalyses 2 a plastoquinone + 4 hnu + 2 H2O = 2 a plastoquinol + O2. In terms of biological role, photosystem II (PSII) is a light-driven water:plastoquinone oxidoreductase that uses light energy to abstract electrons from H(2)O, generating O(2) and a proton gradient subsequently used for ATP formation. It consists of a core antenna complex that captures photons, and an electron transfer chain that converts photonic excitation into a charge separation. The D1/D2 (PsbA/PsbD) reaction center heterodimer binds P680, the primary electron donor of PSII as well as several subsequent electron acceptors. The sequence is that of Photosystem II protein D1 from Trichormus azollae (Anabaena azollae).